The following is a 412-amino-acid chain: MEYTTLAVLAGLPEDPHGAVGLPIYAVAAYGFKTLEEGQERFATGEGYVYARQKDPTAKALEERLKALEGALEAVVLASGQAATFAALLALLRPGDEVVAAKGLFGQTIGLFGQVLSLMGVTVRYVDPEPEAVREALSAKTRAVFVETVANPALLVPDLEALATLAEEAGVALVVDNTFGAAGALCRPLAWGAHVVVESLTKWASGHGSVLGGAVLSRETELWRNYPQFLQPDLKGQIPWEALRARCFPERVRTLGLSLCGMALSPFNAYLLFQGLETVALRVARMSETARFLAERLQGHPKVKALRYPGLPEDPAHRNARKYLASGGPILTLDLGDLERASRFLGAIRLLKAANLGDARTLLVHPWTTTHSRLKEEARLQAGVTPGLVRVSVGLEDPLDLLALFEEALEAV.

At Lys-202 the chain carries N6-(pyridoxal phosphate)lysine.

Belongs to the trans-sulfuration enzymes family. Homotetramer. Pyridoxal 5'-phosphate is required as a cofactor.

It catalyses the reaction O-acetyl-L-homoserine + hydrogen sulfide = L-homocysteine + acetate. With respect to regulation, inhibited by the carbonyl reagents hydroxylamine and phenylhydrazine. Also inhibited by methionine and propargylglycine. In terms of biological role, catalyzes the conversion of O-acetyl-L-homoserine (OAH) into homocysteine in the methionine biosynthesis pathway. Has weak activity with O-acetyl-L-serine, O-phospho-L-serine, L-serine, O-succinyl-L-homoserine and L-homoserine. Shows a very low CTT gamma-synthase activity. The sequence is that of O-acetyl-L-homoserine sulfhydrylase 2 from Thermus thermophilus (strain ATCC 27634 / DSM 579 / HB8).